Here is a 343-residue protein sequence, read N- to C-terminus: T-cell immunoglobulin and mucin domain-containing protein 4 (343 aa).

Residues 1-22 (MSKGLLLLWLVTELWWLYLTPA) form the signal peptide. Positions 23–128 (ASEDTIIGFL…WFNDVKKNVR (106 aa)) constitute an Ig-like V-type domain. The Extracellular portion of the chain corresponds to 23 to 279 (ASEDTIIGFL…KSHQINSRQT (257 aa)). Intrachain disulfides connect cysteine 40/cysteine 112, cysteine 53/cysteine 64, and cysteine 59/cysteine 111. A glycan (N-linked (GlcNAc...) asparagine) is linked at asparagine 220. The tract at residues 239-258 (TGSNPGILPSTSQLTTQKTT) is disordered. A compositionally biased stretch (low complexity) spans 248 to 258 (STSQLTTQKTT). Residues 280–300 (ILIIACCVGFVLMVLLFLAFL) traverse the membrane as a helical segment. The Cytoplasmic segment spans residues 301 to 343 (LRGKVTGANCLQRHKRPDNTEDSDSVLNDMSHGRDDEDGIFTL). A disordered region spans residues 313 to 343 (RHKRPDNTEDSDSVLNDMSHGRDDEDGIFTL). Residues serine 323, serine 325, and serine 331 each carry the phosphoserine modification.

Belongs to the immunoglobulin superfamily. TIM family. Homodimer. Predominantly expressed in lymphoid tissues, such as spleen, lymph nodes, and Peyer patches. Also expressed in fetal liver, salivary gland, and spleen stromal cells, predominantly in the marginal zone and to a lesser extent throughout the white pulp. Not expressed in bone marrow-derived cells. Expressed mainly by antigen presenting cells (APCs) in T- and B-cell areas, but not by T- or B-lymphocytes.

It localises to the membrane. Phosphatidylserine receptor that plays different role in immune response including phagocytosis of apoptotic cells and T-cell regulation. Controls T-cell activation in a bimodal fashion, decreasing the activation of naive T-cells by inducing cell cycle arrest, while increasing proliferation of activated T-cells by activating AKT1 and ERK1/2 phosphorylations and subsequent signaling pathways. Also plays a role in efferocytosis which is the process by which apoptotic cells are removed by phagocytic cells. Mechanistically, promotes the engulfment of apoptotic cells or exogenous particles by securing them to phagocytes through direct binding to phosphatidylserine present on apoptotic cells, while other engulfment receptors such as MERTK efficiently recognize apoptotic cells and mediate their ingestion. Additionally, promotes autophagy process by suppressing NLRP3 inflammasome activity via activation of STK11/PRKAA1 pathway in a phosphatidylserine-dependent mechanism. The sequence is that of T-cell immunoglobulin and mucin domain-containing protein 4 (Timd4) from Mus musculus (Mouse).